A 123-amino-acid polypeptide reads, in one-letter code: UPF0102 protein Maqu_2464 (123 aa).

The protein belongs to the UPF0102 family.

The sequence is that of UPF0102 protein Maqu_2464 from Marinobacter nauticus (strain ATCC 700491 / DSM 11845 / VT8) (Marinobacter aquaeolei).